The chain runs to 214 residues: Melanoregulin (214 aa).

The Cholesterol-binding sequence motif motif lies at 162–172 (LSERYLFVVDR). The residue at position 213 (Ser-213) is a Phosphoserine.

This sequence belongs to the melanoregulin family. In terms of assembly, identified in a complex with RILP and DCTN1; interacts directly with RILP, but does not interact directly with DCTN1. Interacts with PRPH2. Palmitoylated. Palmitoylation is required to maintain the protein at the melanosome membrane. As to expression, expressed in photoreceptor cells (at protein level).

The protein resides in the apical cell membrane. The protein localises to the melanosome membrane. Its subcellular location is the lysosome membrane. It localises to the cytoplasmic vesicle membrane. Its function is as follows. Probably functions as a cargo-recognition protein that couples cytoplasmic vesicles to the transport machinery. Plays a role in hair pigmentation, a process that involves shedding of melanosome-containing vesicles from melanocytes, followed by phagocytosis of the melanosome-containing vesicles by keratinocytes. Functions on melanosomes as receptor for RILP and the complex formed by RILP and DCTN1, and thereby contributes to retrograde melanosome transport from the cell periphery to the center. Overexpression causes accumulation of late endosomes and/or lysosomes at the microtubule organising center (MTOC) at the center of the cell. Probably binds cholesterol and requires the presence of cholesterol in membranes to function in microtubule-mediated retrograde organelle transport. Binds phosphatidylinositol 3-phosphate, phosphatidylinositol 4-phosphate, phosphatidylinositol 5-phosphate and phosphatidylinositol 3,5-bisphosphate, but not phosphatidylinositol 3,4-bisphosphate or phosphatidylinositol 4,5-bisphosphate. Required for normal phagosome clearing and normal activation of lysosomal enzymes in lysosomes from retinal pigment epithelium cells. Required for normal degradation of the lipofuscin component N-retinylidene-N-retinylethanolamine (A2E) in the eye. May function in membrane fusion and regulate the biogenesis of disk membranes of photoreceptor rod cells. The polypeptide is Melanoregulin (MREG) (Homo sapiens (Human)).